A 104-amino-acid polypeptide reads, in one-letter code: NADH-ubiquinone oxidoreductase 12 kDa subunit, mitochondrial (104 aa).

Belongs to the complex I NDUFS6 subunit family. Complex I is composed of about 40 different subunits.

It is found in the mitochondrion inner membrane. In terms of biological role, accessory subunit of the mitochondrial membrane respiratory chain NADH dehydrogenase (Complex I), that is believed not to be involved in catalysis. Complex I functions in the transfer of electrons from NADH to the respiratory chain. The immediate electron acceptor for the enzyme is believed to be ubiquinone. The sequence is that of NADH-ubiquinone oxidoreductase 12 kDa subunit, mitochondrial (nuo-12.3) from Neurospora crassa (strain ATCC 24698 / 74-OR23-1A / CBS 708.71 / DSM 1257 / FGSC 987).